A 141-amino-acid polypeptide reads, in one-letter code: Hemoglobin subunit alpha (141 aa).

Positions 1–141 (VLSAADKGNV…VSTVLTSKYR (141 aa)) constitute a Globin domain. Ser-3 bears the Phosphoserine mark. N6-succinyllysine occurs at positions 7 and 11. The residue at position 16 (Lys-16) is an N6-acetyllysine; alternate. Lys-16 carries the N6-succinyllysine; alternate modification. Tyr-24 bears the Phosphotyrosine mark. Ser-35 bears the Phosphoserine mark. Lys-40 is subject to N6-succinyllysine. His-58 is a binding site for O2. His-87 provides a ligand contact to heme b. Ser-102 carries the post-translational modification Phosphoserine. Thr-108 bears the Phosphothreonine mark. Phosphoserine is present on residues Ser-124 and Ser-131. Phosphothreonine is present on residues Thr-134 and Thr-137. Ser-138 carries the phosphoserine modification.

The protein belongs to the globin family. In terms of assembly, heterotetramer of two alpha chains and two beta chains. As to expression, red blood cells.

Involved in oxygen transport from the lung to the various peripheral tissues. In terms of biological role, hemopressin acts as an antagonist peptide of the cannabinoid receptor CNR1. Hemopressin-binding efficiently blocks cannabinoid receptor CNR1 and subsequent signaling. This Macrotus californicus (Californian leaf-nosed bat) protein is Hemoglobin subunit alpha (HBA).